The sequence spans 515 residues: Cytochrome P450 76C3 (515 aa).

The chain crosses the membrane as a helical span at residues Leu5–Ala25. Position 451 (Cys451) interacts with heme.

It belongs to the cytochrome P450 family. Heme is required as a cofactor.

Its subcellular location is the membrane. The polypeptide is Cytochrome P450 76C3 (CYP76C3) (Arabidopsis thaliana (Mouse-ear cress)).